The following is a 206-amino-acid chain: Small ribosomal subunit protein uS4c (206 aa).

Composition is skewed to basic residues over residues 1-13 and 25-34; these read MSRY…RITR and QSKKKGRPGQ. The interval 1–50 is disordered; that stretch reads MSRYRGPKLRITRRLGALPGLTQKQSKKKGRPGQHGKSNEADNSKKTTEY. The span at 37–50 shows a compositional bias: basic and acidic residues; the sequence is KSNEADNSKKTTEY. An S4 RNA-binding domain is found at 95–157; that stretch reads MRLDTICFTL…ATSKNLVEGN (63 aa).

It belongs to the universal ribosomal protein uS4 family. As to quaternary structure, part of the 30S ribosomal subunit. Contacts protein S5. The interaction surface between S4 and S5 is involved in control of translational fidelity.

The protein resides in the plastid. The protein localises to the chloroplast. Its function is as follows. One of the primary rRNA binding proteins, it binds directly to 16S rRNA where it nucleates assembly of the body of the 30S subunit. In terms of biological role, with S5 and S12 plays an important role in translational accuracy. This is Small ribosomal subunit protein uS4c (rps4) from Trieres chinensis (Marine centric diatom).